We begin with the raw amino-acid sequence, 589 residues long: Probable ATP-dependent RNA helicase DDX59 (589 aa).

2 disordered regions span residues 1 to 36 (MFVP…QLEG) and 48 to 98 (KEAV…SKTQ). Basic and acidic residues predominate over residues 12–27 (NSNDDLKSCEAKKSKP). Lys26 participates in a covalent cross-link: Glycyl lysine isopeptide (Lys-Gly) (interchain with G-Cter in SUMO2). The residue at position 64 (Ser64) is a Phosphoserine. The segment covering 80–91 (GVKDSHPSEEPV) has biased composition (basic and acidic residues). The HIT-type zinc finger occupies 104 to 133 (GEPVCVVCGRYGEYICDKTDEDVCSLECKA). 2 positions are modified to phosphoserine: Ser156 and Ser160. Residues 203 to 231 (IDFEHCGFPETLNQNLKKSGYEVPTPIQM) carry the Q motif motif. The region spanning 234–375 (IPVGLLGRDI…DQLLHNPVRI (142 aa)) is the Helicase ATP-binding domain. Residue 247–254 (ADTGSGKT) coordinates ATP. The DEAD box motif lies at 323-326 (VKAD). One can recognise a Helicase C-terminal domain in the interval 399-549 (KKKKLFEILN…ILPPQLLNSP (151 aa)).

This sequence belongs to the DEAD box helicase family. DDX59 subfamily. As to quaternary structure, interacts (via HIT-type zinc finger) with the RUVBL1/RUVBL2 complex in the presence of ADP.

The protein localises to the cytoplasm. Its subcellular location is the nucleus. It carries out the reaction ATP + H2O = ADP + phosphate + H(+). The chain is Probable ATP-dependent RNA helicase DDX59 (Ddx59) from Rattus norvegicus (Rat).